We begin with the raw amino-acid sequence, 217 residues long: Nascent polypeptide-associated complex subunit alpha (217 aa).

The interval 1–45 (MPELTEIKSEAAPSTSAEAKPEDVRVEDDGSDSDSDGGMPGLEEA) is disordered. Residues 19–28 (AKPEDVRVED) are compositionally biased toward basic and acidic residues. An NAC-A/B domain is found at 70–135 (SRGEKKARKI…AKIEDLSQQA (66 aa)). The segment at 154–177 (SVGATTSVAPIAEEDEEDVDDTGV) is disordered. Positions 165 to 176 (AEEDEEDVDDTG) are enriched in acidic residues. The 41-residue stretch at 177 to 217 (VDEKDIELVITQANTTRAKAIKALKNNNNDIVNAIMELTML) folds into the UBA domain.

This sequence belongs to the NAC-alpha family. In terms of assembly, part of the nascent polypeptide-associated complex (NAC), consisting of Nac-alpha and bicaudal (bic).

In terms of biological role, may promote appropriate targeting of ribosome-nascent polypeptide complexes. Required for correct localization of the osk/oskar protein to the posterior pole during embryonic development. The osk protein directs the recruitment of molecules responsible for posterior body patterning and germline formation in the embryo. This Drosophila melanogaster (Fruit fly) protein is Nascent polypeptide-associated complex subunit alpha (Nacalpha).